Reading from the N-terminus, the 801-residue chain is MTTEKGLLAEAESPPQDQKQEGEEEVESCTTQPVVGSGDKDPETEQSQESPSTTSPSTRKSKDRHSQGKGLSRLFSSFLKRPKSQVSSDEKEVELLGEKGQDQKDVDEGLGEQLEDDVFLKAPIAAPEPELRTDPSLDLHSLSSAETQPAQEEQKEDQDPEADCEDVEGKEPIKKPEGESKASHKVVRRSPNMRCKVTLLDDTVYECDLEKHAKGQDIFKKVCSHLNIVEEDYFGLAIWESPTCKVWLDPLKDIRKQVHGGPCEFTSNVKFYPPDPAQLSEDITRYYLCLQLRKDIFSGRLPCSFATLALLGSYTVQSEVGDYEEDLHGVDYVSEFKLSPNQTKDLEEKVGELHKSYRSMTPAQADLEFLENAKKLTMYGVDIHQAKDLEGVDIKLGVCSGGLMVFKDNLRINRFPWPKVLKISYKRSSFFIKIRPGEQEQYESTIGFKLPSYKAAKKLWKVCVEHHTFFRLTSTESIPKHRFLSLGSTFRYSGRTQAQTRHASALIDRPAPHFVRTGSKRASRSLDGAAVATPEASRTHRPVSAPVFPPEFPAVQRKTPGPRVEEMPKKTEEKPKEGMPNQRESPKDVKATQQDSPSPTVNGDKVKDLEKTQDEIIRHHASIRELKKSFMESVPAPRPSEWDKRLSTHSPFRTLSFNGQVQTGTDGPPLVKTQTVTISNATNGEKGEIPTKEVPLVHTETKTITYEAARSDDVNTDQEPGILLTAHTITSETTSSTTTTQITKTVKGGISETLIEKRIVITGDGDLDHDQVLVQAIKEAKEQHPDMSVTKGVVHQETEIA.

The disordered stretch occupies residues 1 to 187; sequence MTTEKGLLAE…GESKASHKVV (187 aa). Low complexity predominate over residues 45–58; the sequence is EQSQESPSTTSPST. A compositionally biased stretch (basic and acidic residues) spans 88–107; that stretch reads SDEKEVELLGEKGQDQKDVD. Positions 108–117 are enriched in acidic residues; that stretch reads EGLGEQLEDD. Positions 141 to 151 are enriched in polar residues; it reads SLSSAETQPAQ. Over residues 154-166 the composition is skewed to acidic residues; it reads QKEDQDPEADCED. Basic and acidic residues predominate over residues 167 to 182; sequence VEGKEPIKKPEGESKA. In terms of domain architecture, FERM spans 193–474; it reads MRCKVTLLDD…EHHTFFRLTS (282 aa). The tract at residues 477-587 is hydrophilic; the sequence is SIPKHRFLSL…GMPNQRESPK (111 aa). Residues 516-613 form a disordered region; it reads RTGSKRASRS…DKVKDLEKTQ (98 aa). Residues 563–577 are compositionally biased toward basic and acidic residues; the sequence is RVEEMPKKTEEKPKE. Residues 588 to 651 form a spectrin--actin-binding region; it reads DVKATQQDSP…WDKRLSTHSP (64 aa). Over residues 591–601 the composition is skewed to polar residues; that stretch reads ATQQDSPSPTV. Positions 604-613 are enriched in basic and acidic residues; sequence DKVKDLEKTQ. The segment at 653-801 is C-terminal (CTD); sequence RTLSFNGQVQ…GVVHQETEIA (149 aa).

In terms of assembly, binds with a high affinity to glycophorin and with lower affinity to band III protein. Associates with the nuclear mitotic apparatus. Binds calmodulin. Post-translationally, phosphorylated at multiple sites by different protein kinases and each phosphorylation event selectively modulates the protein's functions. As to expression, found exclusively in photoreceptors following the terminal mitosis of retinal neurons. When retinal synaptogenesis is complete, protein 4.1 is also expressed in the inner retina. In adult amphibian retinas, protein 4.1 is detected in photoreceptors, bipolar cells, and ganglion cell axons.

It is found in the nucleus. Its subcellular location is the cytoplasm. The protein localises to the cytoskeleton. The protein resides in the cell cortex. Protein 4.1 is a major structural element of the erythrocyte membrane skeleton. It plays a key role in regulating membrane physical properties of mechanical stability and deformability by stabilizing spectrin-actin interaction. May be required for dynein-dynactin complex and NUMA1 recruitment at the mitotic cell cortex during anaphase. This Xenopus laevis (African clawed frog) protein is Protein 4.1.